A 289-amino-acid chain; its full sequence is F-box protein PP2-B15 (289 aa).

Residues 1-43 form the F-box domain; sequence MMLPEACVATILSFTTPADTISSAAVSSVFRVAGDSDFVWEKF.

In Arabidopsis thaliana (Mouse-ear cress), this protein is F-box protein PP2-B15 (PP2B15).